A 190-amino-acid chain; its full sequence is GTP cyclohydrolase 1 (190 aa).

The Zn(2+) site is built by C75, H78, and C146.

The protein belongs to the GTP cyclohydrolase I family. Homomer.

The enzyme catalyses GTP + H2O = 7,8-dihydroneopterin 3'-triphosphate + formate + H(+). The protein operates within cofactor biosynthesis; 7,8-dihydroneopterin triphosphate biosynthesis; 7,8-dihydroneopterin triphosphate from GTP: step 1/1. This is GTP cyclohydrolase 1 from Campylobacter concisus (strain 13826).